A 546-amino-acid chain; its full sequence is Chaperonin GroEL 1 (546 aa).

ATP-binding positions include 29–32, 86–90, glycine 414, and aspartate 499; these read TLGP and DGTTT.

This sequence belongs to the chaperonin (HSP60) family. In terms of assembly, forms a cylinder of 14 subunits composed of two heptameric rings stacked back-to-back. Interacts with the co-chaperonin GroES.

It localises to the cytoplasm. It carries out the reaction ATP + H2O + a folded polypeptide = ADP + phosphate + an unfolded polypeptide.. Together with its co-chaperonin GroES, plays an essential role in assisting protein folding. The GroEL-GroES system forms a nano-cage that allows encapsulation of the non-native substrate proteins and provides a physical environment optimized to promote and accelerate protein folding. The sequence is that of Chaperonin GroEL 1 from Roseiflexus sp. (strain RS-1).